The sequence spans 114 residues: MTFQSKKFPSTANTNTFAAKYRAMMKKHPFLLFGLPFMSVIVAGSFILTPAAAIRYEKYDRKVRQVSREEELGLGQRKRRVDIREEYYRLAAKDLDNWEQKRVERLKGESDGLL.

The chain crosses the membrane as a helical span at residues 29-49 (PFLLFGLPFMSVIVAGSFILT).

The protein belongs to the COX16 family.

Its subcellular location is the mitochondrion inner membrane. Required for the assembly of the mitochondrial respiratory chain complex IV (CIV), also known as cytochrome c oxidase. May participate in merging the COX1 and COX2 assembly lines. The sequence is that of Cytochrome c oxidase assembly protein cox16, mitochondrial (cox-9) from Neurospora crassa (strain ATCC 24698 / 74-OR23-1A / CBS 708.71 / DSM 1257 / FGSC 987).